A 121-amino-acid polypeptide reads, in one-letter code: uncharacterized protein (121 aa).

Residues K9 to K77 enclose the HTH gntR-type domain. The segment at residues V37–S56 is a DNA-binding region (H-T-H motif).

This is an uncharacterized protein from Bacillus subtilis (strain 168).